The following is a 721-amino-acid chain: MVERILNSEDISLLISGRQSNPHKLLGIISENSSQDRIILFRPGAHSVAVELQGNIEHATHHHSGIFSLTTPKGTLLNDYRIYHQNGLLAHDPYAFSPLWGEIDSFLFHQGTHYKIYERMGAIPCDVRGISGVLFVVWAPHAQRVSVIGDFNFWNGLVNPLRKVSDSGVWELFIPGLDEGTLYKWEIVSASGEILIKTDPYGKGFDVPPLATSRVINSDRYVWHDAEWMEKRSCTQDQPLSIYEVHVGSWQWQDGRPIGYRGLAERLAQYCKEMSYTHIELLPITEHPLNESWGYQVTGYYAPTWRYGSPEDFQFFVDHLHSEGIGVILDWVPGHFPTDTFALAHFDGEALYESVDHKEPLHPHWHTYTFDYRCNEVVNFLLGSALFWLDKMHIDGLRVDAVTSMLYLDYGRKEGEWSPNIHGGKENLDAIEFLKHFNFIVHKEFPGVMTFAEESTDFPKVTEPINSGGLGFDYKWNLGWMHDTFRYLKVDPIFRAYHHNDLTFSIWYAFKENYLLPLSHDEVVHGKGSLLQKVPGDTWSKFAHMRLLLSYQICQPGKKLVFMGGEFAQGREWSPDRSLDWHLLDNPYHATLHKCVAKMNSLYRDLPYFWQGDGKQESFRWIDFKDTENNVISYYRLSGNDSNQALLCIHHFSSGYIPSYVLHCQGIKMCQLLFNSDDIGFGGSGKGNRPPILCIDHGFSWGIDIELPPLATLIFLVRFSN.

D400 acts as the Nucleophile in catalysis. E453 functions as the Proton donor in the catalytic mechanism.

It belongs to the glycosyl hydrolase 13 family. GlgB subfamily. As to quaternary structure, monomer.

The enzyme catalyses Transfers a segment of a (1-&gt;4)-alpha-D-glucan chain to a primary hydroxy group in a similar glucan chain.. It participates in glycan biosynthesis; glycogen biosynthesis. Its function is as follows. Catalyzes the formation of the alpha-1,6-glucosidic linkages in glycogen by scission of a 1,4-alpha-linked oligosaccharide from growing alpha-1,4-glucan chains and the subsequent attachment of the oligosaccharide to the alpha-1,6 position. This chain is 1,4-alpha-glucan branching enzyme GlgB, found in Chlamydia felis (strain Fe/C-56) (Chlamydophila felis).